The sequence spans 142 residues: Large ribosomal subunit protein uL13 (142 aa).

It belongs to the universal ribosomal protein uL13 family. As to quaternary structure, part of the 50S ribosomal subunit.

Its function is as follows. This protein is one of the early assembly proteins of the 50S ribosomal subunit, although it is not seen to bind rRNA by itself. It is important during the early stages of 50S assembly. The sequence is that of Large ribosomal subunit protein uL13 from Aeromonas salmonicida (strain A449).